A 204-amino-acid polypeptide reads, in one-letter code: Proteasome subunit beta type-2-A (204 aa).

N-acetylmethionine is present on Met1.

Belongs to the peptidase T1B family. In terms of assembly, component of the 20S core complex of the 26S proteasome. The 26S proteasome is composed of a core protease (CP), known as the 20S proteasome, capped at one or both ends by the 19S regulatory particle (RP/PA700). The 20S proteasome core is composed of 28 subunits that are arranged in four stacked rings, resulting in a barrel-shaped structure. The two end rings are each formed by seven alpha subunits, and the two central rings are each formed by seven beta subunits. The catalytic chamber with the active sites is on the inside of the barrel.

The protein localises to the cytoplasm. It is found in the nucleus. Its function is as follows. Non-catalytic component of the proteasome, a multicatalytic proteinase complex which is characterized by its ability to cleave peptides with Arg, Phe, Tyr, Leu, and Glu adjacent to the leaving group at neutral or slightly basic pH. The proteasome has an ATP-dependent proteolytic activity. This is Proteasome subunit beta type-2-A (PBD1) from Arabidopsis thaliana (Mouse-ear cress).